A 103-amino-acid chain; its full sequence is Large ribosomal subunit protein bL21 (103 aa).

It belongs to the bacterial ribosomal protein bL21 family. In terms of assembly, part of the 50S ribosomal subunit. Contacts protein L20.

This protein binds to 23S rRNA in the presence of protein L20. The sequence is that of Large ribosomal subunit protein bL21 from Colwellia psychrerythraea (strain 34H / ATCC BAA-681) (Vibrio psychroerythus).